The following is a 407-amino-acid chain: Biotin synthase (407 aa).

The Radical SAM core domain maps to 47–277; it reads WFGRRVKLNY…DVEVRIAGGR (231 aa). Residues Cys-65, Cys-69, and Cys-72 each coordinate [4Fe-4S] cluster. Positions 109, 142, 202, and 272 each coordinate [2Fe-2S] cluster. The disordered stretch occupies residues 368–407; it reads GGGVCAPAPAATTPRPAEEPRTDLVAVRRRGAGTDLAPNA. Residues 373-382 are compositionally biased toward low complexity; it reads APAPAATTPR.

It belongs to the radical SAM superfamily. Biotin synthase family. Homodimer. [4Fe-4S] cluster is required as a cofactor. The cofactor is [2Fe-2S] cluster.

The enzyme catalyses (4R,5S)-dethiobiotin + (sulfur carrier)-SH + 2 reduced [2Fe-2S]-[ferredoxin] + 2 S-adenosyl-L-methionine = (sulfur carrier)-H + biotin + 2 5'-deoxyadenosine + 2 L-methionine + 2 oxidized [2Fe-2S]-[ferredoxin]. Its pathway is cofactor biosynthesis; biotin biosynthesis; biotin from 7,8-diaminononanoate: step 2/2. Its function is as follows. Catalyzes the conversion of dethiobiotin (DTB) to biotin by the insertion of a sulfur atom into dethiobiotin via a radical-based mechanism. The protein is Biotin synthase of Streptomyces coelicolor (strain ATCC BAA-471 / A3(2) / M145).